Reading from the N-terminus, the 405-residue chain is Imidazolonepropionase (405 aa).

Fe(3+)-binding residues include histidine 72 and histidine 74. Zn(2+) is bound by residues histidine 72 and histidine 74. Positions 81, 144, and 177 each coordinate 4-imidazolone-5-propanoate. Tyrosine 144 serves as a coordination point for N-formimidoyl-L-glutamate. A Fe(3+)-binding site is contributed by histidine 242. Histidine 242 is a binding site for Zn(2+). Residue glutamine 245 participates in 4-imidazolone-5-propanoate binding. Aspartate 317 provides a ligand contact to Fe(3+). Aspartate 317 is a Zn(2+) binding site. Positions 319 and 321 each coordinate N-formimidoyl-L-glutamate. Residue threonine 322 participates in 4-imidazolone-5-propanoate binding.

This sequence belongs to the metallo-dependent hydrolases superfamily. HutI family. The cofactor is Zn(2+). It depends on Fe(3+) as a cofactor.

The protein resides in the cytoplasm. The catalysed reaction is 4-imidazolone-5-propanoate + H2O = N-formimidoyl-L-glutamate. Its pathway is amino-acid degradation; L-histidine degradation into L-glutamate; N-formimidoyl-L-glutamate from L-histidine: step 3/3. Catalyzes the hydrolytic cleavage of the carbon-nitrogen bond in imidazolone-5-propanoate to yield N-formimidoyl-L-glutamate. It is the third step in the universal histidine degradation pathway. The chain is Imidazolonepropionase from Erwinia tasmaniensis (strain DSM 17950 / CFBP 7177 / CIP 109463 / NCPPB 4357 / Et1/99).